The following is a 267-amino-acid chain: Large ribosomal subunit protein uL3 (267 aa).

Residues 124–147 form a disordered region; it reads NQHIGPKSHGGGGGSQPVRQTGSL.

It belongs to the universal ribosomal protein uL3 family. Part of the 50S ribosomal subunit. Forms a cluster with proteins L14 and L19.

In terms of biological role, one of the primary rRNA binding proteins, it binds directly near the 3'-end of the 23S rRNA, where it nucleates assembly of the 50S subunit. The sequence is that of Large ribosomal subunit protein uL3 from Mycoplasmopsis agalactiae (strain NCTC 10123 / CIP 59.7 / PG2) (Mycoplasma agalactiae).